A 370-amino-acid chain; its full sequence is Versatile peroxidase VPS1 (370 aa).

The first 20 residues, 1-20 (MAFAKLSAFVLALGATVALG), serve as a signal peptide directing secretion. Residues 21–31 (ESPTHRCLNKR) constitute a propeptide that is removed on maturation. 4 cysteine pairs are disulfide-bonded: C34–C46, C45–C315, C65–C151, and C279–C344. Mn(2+)-binding residues include E67 and E71. The active-site Proton acceptor is the H78. Ca(2+)-binding residues include D79, G97, D99, and S101. N-linked (GlcNAc...) asparagine glycosylation occurs at N133. The Tryptophan radical intermediate role is filled by W201. H206 lines the heme b pocket. T207 contacts Ca(2+). A heme b-binding site is contributed by 210–214 (AADHV). D212 provides a ligand contact to Mn(2+). D224, T226, T229, and D231 together coordinate Ca(2+).

Belongs to the peroxidase family. Ligninase subfamily. Heme b is required as a cofactor. The cofactor is Ca(2+).

It is found in the secreted. The catalysed reaction is 1-(4-hydroxy-3-methoxyphenyl)-2-(2-methoxyphenoxy)propane-1,3-diol + H2O2 = guaiacol + vanillin + glycolaldehyde + H2O. It carries out the reaction 2 Mn(2+) + H2O2 + 2 H(+) = 2 Mn(3+) + 2 H2O. In terms of biological role, a versatile ligninolytic peroxidase that combines the substrate specificity characteristics of the two other ligninolytic peroxidases, manganese peroxidase and lignin peroxidase. The protein is Versatile peroxidase VPS1 (vps1) of Pleurotus eryngii (Boletus of the steppes).